The following is a 223-amino-acid chain: Cytidylate kinase (223 aa).

10–18 lines the ATP pocket; the sequence is GPASSGKST.

This sequence belongs to the cytidylate kinase family. Type 1 subfamily.

The protein localises to the cytoplasm. It carries out the reaction CMP + ATP = CDP + ADP. It catalyses the reaction dCMP + ATP = dCDP + ADP. The protein is Cytidylate kinase of Streptococcus pneumoniae (strain Taiwan19F-14).